A 313-amino-acid chain; its full sequence is ADP-L-glycero-D-manno-heptose-6-epimerase (313 aa).

NADP(+) is bound by residues 10–11 (MI), 31–32 (DN), lysine 38, arginine 53, 75–79 (EGACS), and asparagine 92. The active-site Proton acceptor is tyrosine 139. Lysine 143 lines the NADP(+) pocket. Asparagine 174 contributes to the substrate binding site. Residues valine 175 and lysine 183 each coordinate NADP(+). Lysine 183 serves as the catalytic Proton acceptor. Residues serine 185, histidine 192, 206 to 209 (FEGS), arginine 214, and tyrosine 277 contribute to the substrate site.

This sequence belongs to the NAD(P)-dependent epimerase/dehydratase family. HldD subfamily. As to quaternary structure, homopentamer. It depends on NADP(+) as a cofactor.

It catalyses the reaction ADP-D-glycero-beta-D-manno-heptose = ADP-L-glycero-beta-D-manno-heptose. It functions in the pathway nucleotide-sugar biosynthesis; ADP-L-glycero-beta-D-manno-heptose biosynthesis; ADP-L-glycero-beta-D-manno-heptose from D-glycero-beta-D-manno-heptose 7-phosphate: step 4/4. The protein operates within bacterial outer membrane biogenesis; LPS core biosynthesis. Functionally, catalyzes the interconversion between ADP-D-glycero-beta-D-manno-heptose and ADP-L-glycero-beta-D-manno-heptose via an epimerization at carbon 6 of the heptose. The chain is ADP-L-glycero-D-manno-heptose-6-epimerase from Vibrio parahaemolyticus serotype O3:K6 (strain RIMD 2210633).